The chain runs to 252 residues: Isoprenyl transferase (252 aa).

The active site involves aspartate 28. Aspartate 28 contributes to the Mg(2+) binding site. Substrate is bound by residues 29–32 (GNGR), tryptophan 33, arginine 41, histidine 45, and 73–75 (STE). Residue asparagine 76 is the Proton acceptor of the active site. Residues tryptophan 77, arginine 79, arginine 200, and 206 to 208 (RLS) contribute to the substrate site. Residue glutamate 219 coordinates Mg(2+).

The protein belongs to the UPP synthase family. In terms of assembly, homodimer. The cofactor is Mg(2+).

Its function is as follows. Catalyzes the condensation of isopentenyl diphosphate (IPP) with allylic pyrophosphates generating different type of terpenoids. The protein is Isoprenyl transferase of Streptococcus pneumoniae serotype 4 (strain ATCC BAA-334 / TIGR4).